The sequence spans 429 residues: Glutamate--tRNA ligase 1 (429 aa).

Positions 6 to 16 (PSPTGDMHIGN) match the 'HIGH' region motif. A 'KMSKS' region motif is present at residues 235-239 (KMSKR). Lys238 is an ATP binding site.

The protein belongs to the class-I aminoacyl-tRNA synthetase family. Glutamate--tRNA ligase type 1 subfamily. As to quaternary structure, monomer.

It localises to the cytoplasm. It catalyses the reaction tRNA(Glu) + L-glutamate + ATP = L-glutamyl-tRNA(Glu) + AMP + diphosphate. Catalyzes the attachment of glutamate to tRNA(Glu) in a two-step reaction: glutamate is first activated by ATP to form Glu-AMP and then transferred to the acceptor end of tRNA(Glu). This chain is Glutamate--tRNA ligase 1, found in Campylobacter fetus subsp. fetus (strain 82-40).